Consider the following 997-residue polypeptide: Translation initiation factor IF-2 (997 aa).

Positions 101–406 are disordered; that stretch reads ELAAEQAAAR…SRNQHQDRRH (306 aa). Low complexity-rich tracts occupy residues 116-185 and 195-209; these read AEAV…QAEP and AAPA…EPAK. Over residues 231–242 the composition is skewed to polar residues; the sequence is TELTSQTPTPVA. The span at 256-280 shows a compositional bias: low complexity; it reads AEPAAAPKTTAKPGEIRRAAAPAAP. Residues 281–292 are compositionally biased toward basic and acidic residues; it reads DRAREEARRAAE. A compositionally biased stretch (gly residues) spans 385 to 394; sequence RAGGKGGRGG. The tr-type G domain occupies 498–665; the sequence is PRAPVVTVMG…NVLLQAEILE (168 aa). Residues 507–514 form a G1 region; sequence GHVDHGKT. Residue 507 to 514 participates in GTP binding; that stretch reads GHVDHGKT. Residues 532–536 are G2; it reads GITQH. Positions 553–556 are G3; it reads DTPG. Residues 553–557 and 607–610 contribute to the GTP site; these read DTPGH and NKID. Residues 607–610 are G4; the sequence is NKID. The interval 643–645 is G5; that stretch reads SAK.

It belongs to the TRAFAC class translation factor GTPase superfamily. Classic translation factor GTPase family. IF-2 subfamily.

The protein resides in the cytoplasm. Its function is as follows. One of the essential components for the initiation of protein synthesis. Protects formylmethionyl-tRNA from spontaneous hydrolysis and promotes its binding to the 30S ribosomal subunits. Also involved in the hydrolysis of GTP during the formation of the 70S ribosomal complex. In Bordetella pertussis (strain Tohama I / ATCC BAA-589 / NCTC 13251), this protein is Translation initiation factor IF-2.